The following is a 394-amino-acid chain: Elongation factor Tu (394 aa).

The 196-residue stretch at 10–205 (KPHVNIGTIG…VDNWIPLPPR (196 aa)) folds into the tr-type G domain. The G1 stretch occupies residues 19–26 (GHVDHGKT). Residue 19–26 (GHVDHGKT) coordinates GTP. Thr-26 is a Mg(2+) binding site. The G2 stretch occupies residues 60–64 (GITIN). The segment at 81–84 (DCPG) is G3. Residues 81 to 85 (DCPGH) and 136 to 139 (NKCD) each bind GTP. The segment at 136 to 139 (NKCD) is G4. The segment at 174–176 (SAL) is G5.

The protein belongs to the TRAFAC class translation factor GTPase superfamily. Classic translation factor GTPase family. EF-Tu/EF-1A subfamily. As to quaternary structure, monomer.

It localises to the cytoplasm. It catalyses the reaction GTP + H2O = GDP + phosphate + H(+). Its function is as follows. GTP hydrolase that promotes the GTP-dependent binding of aminoacyl-tRNA to the A-site of ribosomes during protein biosynthesis. The chain is Elongation factor Tu from Bacteroides thetaiotaomicron (strain ATCC 29148 / DSM 2079 / JCM 5827 / CCUG 10774 / NCTC 10582 / VPI-5482 / E50).